The following is a 235-amino-acid chain: Phosphoribosylaminoimidazole-succinocarboxamide synthase (235 aa).

This sequence belongs to the SAICAR synthetase family.

It carries out the reaction 5-amino-1-(5-phospho-D-ribosyl)imidazole-4-carboxylate + L-aspartate + ATP = (2S)-2-[5-amino-1-(5-phospho-beta-D-ribosyl)imidazole-4-carboxamido]succinate + ADP + phosphate + 2 H(+). It functions in the pathway purine metabolism; IMP biosynthesis via de novo pathway; 5-amino-1-(5-phospho-D-ribosyl)imidazole-4-carboxamide from 5-amino-1-(5-phospho-D-ribosyl)imidazole-4-carboxylate: step 1/2. The polypeptide is Phosphoribosylaminoimidazole-succinocarboxamide synthase (Chlorobaculum parvum (strain DSM 263 / NCIMB 8327) (Chlorobium vibrioforme subsp. thiosulfatophilum)).